The following is a 134-amino-acid chain: uncharacterized protein (134 aa).

The helical transmembrane segment at 13 to 35 (FFIAFSAYLVVILLMTAVSVYYL) threads the bilayer.

The protein resides in the membrane. This is an uncharacterized protein from Archaeoglobus fulgidus (strain ATCC 49558 / DSM 4304 / JCM 9628 / NBRC 100126 / VC-16).